We begin with the raw amino-acid sequence, 366 residues long: Uroporphyrinogen decarboxylase (366 aa).

Substrate contacts are provided by residues 28 to 32 (RQAGR), D78, Y160, T215, and H333.

Belongs to the uroporphyrinogen decarboxylase family. Homodimer.

It is found in the cytoplasm. The catalysed reaction is uroporphyrinogen III + 4 H(+) = coproporphyrinogen III + 4 CO2. Its pathway is porphyrin-containing compound metabolism; protoporphyrin-IX biosynthesis; coproporphyrinogen-III from 5-aminolevulinate: step 4/4. In terms of biological role, catalyzes the decarboxylation of four acetate groups of uroporphyrinogen-III to yield coproporphyrinogen-III. The polypeptide is Uroporphyrinogen decarboxylase (Paraburkholderia xenovorans (strain LB400)).